Reading from the N-terminus, the 393-residue chain is DNA primase large subunit PriL (393 aa).

Residues cysteine 230, cysteine 339, cysteine 350, and cysteine 356 each coordinate [4Fe-4S] cluster.

It belongs to the eukaryotic-type primase large subunit family. In terms of assembly, heterodimer of a small subunit (PriS) and a large subunit (PriL). [4Fe-4S] cluster is required as a cofactor.

Regulatory subunit of DNA primase, an RNA polymerase that catalyzes the synthesis of short RNA molecules used as primers for DNA polymerase during DNA replication. Stabilizes and modulates the activity of the small subunit, increasing the rate of DNA synthesis, and conferring RNA synthesis capability. The DNA polymerase activity may enable DNA primase to also catalyze primer extension after primer synthesis. May also play a role in DNA repair. Displays gap-filling and strand-displacement activities. This chain is DNA primase large subunit PriL, found in Pyrococcus abyssi (strain GE5 / Orsay).